The chain runs to 346 residues: DNA-directed RNA polymerases I and III subunit RPAC1 (346 aa).

Ala-2 carries the post-translational modification N-acetylalanine.

This sequence belongs to the archaeal Rpo3/eukaryotic RPB3 RNA polymerase subunit family. Component of the RNA polymerase I and RNA polymerase III complexes consisting of at least 13 and 17 subunits, respectively. Pol I complex consists of a ten-subunit catalytic core composed of POLR1A/RPA1, POLR1B/RPA2, POLR1C/RPAC1, POLR1D/RPAC2, POLR1H/RPA12, POLR2E/RPABC1, POLR2F/RPABC2, POLR2H/RPABC3, POLR2K/RPABC4 and POLR2L/RPABC5; a mobile stalk subunit POLR1F/RPA43 protruding from the core and additional subunits homologous to general transcription factors POLR1E/RPA49 and POLR1G/RPA34. Part of Pol I pre-initiation complex (PIC), in which Pol I core assembles with RRN3 and promoter-bound UTBF and SL1/TIF-IB complex. Pol III complex consists of a ten-subunit catalytic core composed of POLR3A/RPC1, POLR3B/RPC2, POLR1C/RPAC1, POLR1D/RPAC2, POLR3K/RPC10, POLR2E/RPABC1, POLR2F/RPABC2, POLR2H/RPABC3, POLR2K/RPABC4 and POLR2L/RPABC5; a mobile stalk composed of two subunits POLR3H/RPC8 and CRCP/RPC9, protruding from the core and functioning primarily in transcription initiation; and additional subunits homologous to general transcription factors of the RNA polymerase II machinery, POLR3C/RPC3-POLR3F/RPC6-POLR3G/RPC7 heterotrimer required for transcription initiation and POLR3D/RPC4-POLR3E/RPC5 heterodimer involved in both transcription initiation and termination.

It is found in the nucleus. It localises to the cytoplasm. The protein localises to the cytosol. Its function is as follows. DNA-dependent RNA polymerase catalyzes the transcription of DNA into RNA using the four ribonucleoside triphosphates as substrates. Common component of RNA polymerases I and III which synthesize ribosomal RNA precursors and short non-coding RNAs including 5S rRNA, snRNAs, tRNAs and miRNAs, respectively. POLR1C/RPAC1 is part of the polymerase core and may function as a clamp element that moves to open and close the cleft. The protein is DNA-directed RNA polymerases I and III subunit RPAC1 of Mus musculus (Mouse).